The chain runs to 280 residues: DNA repair protein XRCC2 (280 aa).

Ser-10 carries the post-translational modification Phosphoserine.

Belongs to the RecA family. RAD51 subfamily. Interacts with RAD51D. Part of the BCDX2 complex consisting of RAD51B, RAD51C, RAD51D and XRCC2; the complex has a ring-like structure arranged into a flat disk around a central channel. In the absence of DNA, the BCDX2 subcomplex XRCC2:RAD51D formed a multimeric ring structure; in the presence of single-stranded DNA it formed a filamentous structure with the ssDNA.

It is found in the nucleus. The protein resides in the cytoplasm. It localises to the cytoskeleton. Its subcellular location is the microtubule organizing center. The protein localises to the centrosome. Involved in the homologous recombination repair (HRR) pathway of double-stranded DNA, thought to repair chromosomal fragmentation, translocations and deletions. Part of the RAD51 paralog protein complex BCDX2 which acts in the BRCA1-BRCA2-dependent HR pathway. Upon DNA damage, BCDX2 acts downstream of BRCA2 recruitment and upstream of RAD51 recruitment. BCDX2 binds predominantly to the intersection of the four duplex arms of the Holliday junction and to junction of replication forks. The BCDX2 complex was originally reported to bind single-stranded DNA, single-stranded gaps in duplex DNA and specifically to nicks in duplex DNA. The chain is DNA repair protein XRCC2 (XRCC2) from Homo sapiens (Human).